We begin with the raw amino-acid sequence, 206 residues long: Testis-expressed protein 38 (206 aa).

A helical transmembrane segment spans residues 15–35 (VSLYFGILGLCSVITGGCIIF).

The protein resides in the membrane. The sequence is that of Testis-expressed protein 38 (TEX38) from Homo sapiens (Human).